The sequence spans 512 residues: Cytochrome P450 monooxygenase ABA1 (512 aa).

Residues 13–32 (HWLSGILAIATVYLATSYII) traverse the membrane as a helical segment. Heme is bound at residue Cys458.

It belongs to the cytochrome P450 family. The cofactor is heme.

It is found in the membrane. It participates in hormone biosynthesis. Functionally, cytochrome P450 monooxygenase involved in the biosynthesis of abscisic acid (ABA), a phytohormone that acts antagonistically toward salicylic acid (SA), jasmonic acid (JA) and ethylene (ETH) signaling, to impede plant defense responses. During pathogen-host interaction, ABA plays a dual role in disease severity by increasing plant susceptibility and accelerating pathogenesis in the fungus itself. The first step of the pathway catalyzes the reaction from farnesyl diphosphate to alpha-ionylideneethane performed by the alpha-ionylideneethane synthase ABA3 via a three-step reaction mechanism involving 2 neutral intermediates, beta-farnesene and allofarnesene. The cytochrome P450 monooxygenase ABA1 might then be involved in the conversion of alpha-ionylideneethane to alpha-ionylideneacetic acid. Alpha-ionylideneacetic acid is further converted to abscisic acid in 2 steps involving the cytochrome P450 monooxygenase ABA2 and the short-chain dehydrogenase/reductase ABA4, via the intermediates 1'-deoxy-ABA or 1',4'-trans-diol-ABA, depending on the order of action of these 2 enzymes. ABA2 is responsible for the hydroxylation of carbon atom C-1' and ABA4 might be involved in the oxidation of the C-4' carbon atom. This is Cytochrome P450 monooxygenase ABA1 from Pyricularia oryzae (strain Y34) (Rice blast fungus).